The sequence spans 401 residues: Phosphoglycerate kinase (401 aa).

Substrate is bound by residues 26 to 28 (DFN), Arg-41, 64 to 67 (HLGK), Arg-125, and Arg-158. ATP contacts are provided by residues Lys-209, Gly-300, Glu-331, and 357–360 (GGDS).

This sequence belongs to the phosphoglycerate kinase family. As to quaternary structure, monomer.

The protein resides in the cytoplasm. The catalysed reaction is (2R)-3-phosphoglycerate + ATP = (2R)-3-phospho-glyceroyl phosphate + ADP. It participates in carbohydrate degradation; glycolysis; pyruvate from D-glyceraldehyde 3-phosphate: step 2/5. In Clostridium tetani (strain Massachusetts / E88), this protein is Phosphoglycerate kinase.